A 371-amino-acid chain; its full sequence is Chaperone protein DnaJ (371 aa).

Residues 4 to 68 (DYYQILGVSK…QKRAAYDRFG (65 aa)) form the J domain. The segment at 134-212 (GIEKNISFSS…CHGMGRYHKQ (79 aa)) adopts a CR-type zinc-finger fold. The Zn(2+) site is built by cysteine 147, cysteine 150, cysteine 164, cysteine 167, cysteine 186, cysteine 189, cysteine 200, and cysteine 203. 4 CXXCXGXG motif repeats span residues 147 to 154 (CDTCHGTG), 164 to 171 (CDACGGVG), 186 to 193 (CHKCQGNG), and 200 to 207 (CKKCHGMG).

It belongs to the DnaJ family. Homodimer. Requires Zn(2+) as cofactor.

The protein resides in the cytoplasm. Functionally, participates actively in the response to hyperosmotic and heat shock by preventing the aggregation of stress-denatured proteins and by disaggregating proteins, also in an autonomous, DnaK-independent fashion. Unfolded proteins bind initially to DnaJ; upon interaction with the DnaJ-bound protein, DnaK hydrolyzes its bound ATP, resulting in the formation of a stable complex. GrpE releases ADP from DnaK; ATP binding to DnaK triggers the release of the substrate protein, thus completing the reaction cycle. Several rounds of ATP-dependent interactions between DnaJ, DnaK and GrpE are required for fully efficient folding. Also involved, together with DnaK and GrpE, in the DNA replication of plasmids through activation of initiation proteins. This Rickettsia felis (strain ATCC VR-1525 / URRWXCal2) (Rickettsia azadi) protein is Chaperone protein DnaJ.